The following is a 762-amino-acid chain: N,N-dimethylformamidase beta subunit (762 aa).

Heterotetramer of two DmfA1 (alpha) and two DmfA2 (beta) subunits.

It carries out the reaction N,N-dimethylformamide + H2O = dimethylamine + formate. With respect to regulation, activity is slightly inhibited by Mg(2+) and Mn(2+), and slightly increased by Cu(2+). Activity is slightly inhibited by the chelating agents 8-hydroxyquinoline, ethylenediaminetetraacetate, o-phenanthroline and 2,2'-bipyridyl. Its function is as follows. Hydrolyzes N,N-dimethylformamide, and to a lesser extent N,N-dimethylacetamide and N,N-diethylacetamide. Has no activity against the substituted amides N-methylformamide, N-ethylformamide, N-ethylformamide and N-methylacetamide or the unsubstituted amides formamide, nicotinamide, acetoamide, benzamide, acetamide and acrylamide. The protein is N,N-dimethylformamidase beta subunit of Alcaligenes sp.